The sequence spans 337 residues: MSDLPFTLDQLRILKAIAVEGSFKRAADSLYVSQPAVSLQVQNLERQLDVPLFDRGGRRAQLTEAGHLLLSYGEKILSLCQETCRAIEDLQNLQGGTLIVGASQTTGTYLLPKMIGMFRQKYPDVAVQLHVHSTRRTAWSVANGQVDLAIIGGEIPGELTESLEIIPYAEDELALILPVFHPFTKLDTIQKEDLYKLQFITLDSQSTIRKVIDQVLSRSEIDTRRFKIEMELNSIEAIKNAVQSGLGAAFVSTSAIAKELQMGVLHCTPIDGVVIKRTLWLIFNPNRYRSKAAEAFSQEILPQFATPDWNQDVLKLAQKKLVVNVLDAAIPNTSDDG.

An HTH lysR-type domain is found at 6 to 63 (FTLDQLRILKAIAVEGSFKRAADSLYVSQPAVSLQVQNLERQLDVPLFDRGGRRAQLT). Residues 23–42 (FKRAADSLYVSQPAVSLQVQ) constitute a DNA-binding region (H-T-H motif).

This sequence belongs to the LysR transcriptional regulatory family.

Its function is as follows. Trans-acting transcriptional regulator of RuBisCO genes (rbcL and rbcS) expression. The polypeptide is Probable RuBisCO transcriptional regulator (rbcR) (Nostoc sp. (strain PCC 7120 / SAG 25.82 / UTEX 2576)).